Consider the following 316-residue polypeptide: Transaldolase (316 aa).

Lys-131 (schiff-base intermediate with substrate) is an active-site residue.

This sequence belongs to the transaldolase family. Type 1 subfamily. Homodimer.

Its subcellular location is the cytoplasm. It carries out the reaction D-sedoheptulose 7-phosphate + D-glyceraldehyde 3-phosphate = D-erythrose 4-phosphate + beta-D-fructose 6-phosphate. Its pathway is carbohydrate degradation; pentose phosphate pathway; D-glyceraldehyde 3-phosphate and beta-D-fructose 6-phosphate from D-ribose 5-phosphate and D-xylulose 5-phosphate (non-oxidative stage): step 2/3. Its function is as follows. Transaldolase is important for the balance of metabolites in the pentose-phosphate pathway. This chain is Transaldolase, found in Glaesserella parasuis serovar 5 (strain SH0165) (Haemophilus parasuis).